The following is a 412-amino-acid chain: Dihydrolipoyllysine-residue acetyltransferase component of pyruvate dehydrogenase complex (412 aa).

One can recognise a Lipoyl-binding domain in the interval 2–78; that stretch reads PIKILMPVLS…PVNSLIAVLS (77 aa). Residue lysine 43 is modified to N6-lipoyllysine. One can recognise a Peripheral subunit-binding (PSBD) domain in the interval 132–169; that stretch reads FASPLAKRLAKMGNIRLESVKGSGPHGRIVKQDILSYT. Histidine 385 is a catalytic residue.

This sequence belongs to the 2-oxoacid dehydrogenase family. Forms a 24-polypeptide structural core with octahedral symmetry. Requires (R)-lipoate as cofactor.

The catalysed reaction is N(6)-[(R)-dihydrolipoyl]-L-lysyl-[protein] + acetyl-CoA = N(6)-[(R)-S(8)-acetyldihydrolipoyl]-L-lysyl-[protein] + CoA. In terms of biological role, the pyruvate dehydrogenase complex catalyzes the overall conversion of pyruvate to acetyl-CoA and CO(2). It contains multiple copies of three enzymatic components: pyruvate dehydrogenase (E1), dihydrolipoamide acetyltransferase (E2) and lipoamide dehydrogenase (E3). This Rickettsia felis (strain ATCC VR-1525 / URRWXCal2) (Rickettsia azadi) protein is Dihydrolipoyllysine-residue acetyltransferase component of pyruvate dehydrogenase complex (pdhC).